Consider the following 436-residue polypeptide: ATP-sensitive inward rectifier potassium channel 14 (436 aa).

Topologically, residues 1–83 (MGLARALRRL…LSDLFTTCVD (83 aa)) are cytoplasmic. The tract at residues 14–43 (LDSGDSRAGDEEEAGPGLCRNGWAPAPVQS) is disordered. Cys-81 carries the post-translational modification S-nitrosocysteine. The chain crosses the membrane as a helical span at residues 84–110 (VRWRWMCLLFSCSFLASWLLFGLAFWL). Residues 111–133 (IASLHGDLAAPPPPAPCFSHVAS) are Extracellular-facing. The segment at residues 134–150 (FLAAFLFALETQTSIGY) is an intramembrane region (helical; Pore-forming). The Selectivity filter motif lies at 147-152 (SIGYGV). The Extracellular portion of the chain corresponds to 151-159 (GVRSVTEEC). Residues 160-187 (PAAVAAVVLQCIAGCVLDAFVVGAVMAK) traverse the membrane as a helical segment. Over 188 to 436 (MAKPKKRNET…TPTLALTLPP (249 aa)) the chain is Cytoplasmic. The span at 400 to 418 (QEEDEDDETEEGNGVETED) shows a compositional bias: acidic residues. Residues 400 to 436 (QEEDEDDETEEGNGVETEDGAASPRVLTPTLALTLPP) form a disordered region. The span at 426-436 (LTPTLALTLPP) shows a compositional bias: low complexity.

The protein belongs to the inward rectifier-type potassium channel (TC 1.A.2.1) family. KCNJ14 subfamily. In terms of tissue distribution, expressed preferentially in retina.

It is found in the membrane. The enzyme catalyses K(+)(in) = K(+)(out). Its activity is regulated as follows. Channel activity is regulated by variations of cytosolic pH; channels are activated by alkaline and inhibited by acidic pH values. Inhibited by Ba(2+) and Cs(+) in a voltage-dependent manner; sensitivity to those inhibitors is lower than in other Kir channels. Functionally, inward rectifier potassium channels are characterized by a greater tendency to allow potassium to flow into the cell rather than out of it. Their voltage dependence is regulated by the concentration of extracellular potassium; as external potassium is raised, the voltage range of the channel opening shifts to more positive voltages. In Homo sapiens (Human), this protein is ATP-sensitive inward rectifier potassium channel 14 (KCNJ14).